A 462-amino-acid chain; its full sequence is Elongation factor 1-alpha (462 aa).

Gly2 is subject to N,N,N-trimethylglycine. An N6,N6-dimethyllysine; alternate modification is found at Lys3. N6-methyllysine; alternate is present on Lys3. The 238-residue stretch at 5–242 folds into the tr-type G domain; sequence KAHVNVVVIG…DAIEPPVRPS (238 aa). Residues 14–21 are G1; that stretch reads GHVDSGKS. Residue 14–21 coordinates GTP; that stretch reads GHVDSGKS. Lys30 is subject to N6-methyllysine. The segment at 70–74 is G2; sequence GITID. Lys79 carries the N6,N6,N6-trimethyllysine modification. The interval 91-94 is G3; that stretch reads DAPG. Residues 91 to 95 and 153 to 156 each bind GTP; these read DAPGH and NKMD. The G4 stretch occupies residues 153–156; it reads NKMD. Positions 192-194 are G5; it reads SGW. Lys318 is modified (N6,N6-dimethyllysine; alternate). Position 318 is an N6-methyllysine; alternate (Lys318). An N6-methyllysine modification is found at Lys392.

This sequence belongs to the TRAFAC class translation factor GTPase superfamily. Classic translation factor GTPase family. EF-Tu/EF-1A subfamily.

It localises to the cytoplasm. Functionally, this protein promotes the GTP-dependent binding of aminoacyl-tRNA to the A-site of ribosomes during protein biosynthesis. This is Elongation factor 1-alpha (TEF1) from Serendipita indica (Root endophyte fungus).